Reading from the N-terminus, the 117-residue chain is Large ribosomal subunit protein uL18 (117 aa).

This sequence belongs to the universal ribosomal protein uL18 family. Part of the 50S ribosomal subunit; part of the 5S rRNA/L5/L18/L25 subcomplex. Contacts the 5S and 23S rRNAs.

Its function is as follows. This is one of the proteins that bind and probably mediate the attachment of the 5S RNA into the large ribosomal subunit, where it forms part of the central protuberance. The polypeptide is Large ribosomal subunit protein uL18 (Histophilus somni (strain 129Pt) (Haemophilus somnus)).